The chain runs to 163 residues: MADEEKLPPGWEKRMSRSSGRVYYFNHITNASQWERPSGNSSSGGKNGQGEPARVRCSHLLVKHSQSRRPSSWRQEKITRTKEEALELINGYIQKIKSGEEDFESLASQFSDCSSAKARGDLGAFSRGQMQKPFEDASFALRTGEMSGPVFTDSGIHIILRTE.

The WW domain occupies 5–39 (EKLPPGWEKRMSRSSGRVYYFNHITNASQWERPSG). The disordered stretch occupies residues 33 to 54 (QWERPSGNSSSGGKNGQGEPAR). Ser-43 carries the phosphoserine modification. Lys-46 carries the N6-acetyllysine modification. Positions 52–163 (PARVRCSHLL…SGIHIILRTE (112 aa)) constitute a PpiC domain. Ser-71 carries the post-translational modification Phosphoserine; by DAPK1. A Phosphoserine modification is found at Ser-108.

Interacts with STIL. Interacts with KIF20B. Interacts with NEK6. Interacts (via WW domain) with PRKX. Interacts with BTK. Interacts (via PpiC domain) with DAPK1. Interacts with the phosphorylated form of RAF1. Interacts (via WW domain) with ATCAY; upon NGF stimulation. Interacts with PML (isoform PML-4). Interacts with BCL6. Interacts with FBXW7, disrupting FBXW7 dimerization and promoting FBXW7 autoubiquitination and degradation. Directly interacts with RBBP8/CtIP; this interaction depends upon RBBP8 phosphorylation. Interacts (via WW domain) with IRAK3/IRAK-M (when phosphorylated at 'Ser-110') in response to IL33-mediated (but not TLR4 ligand LPS) dendritic cell stimulation. Interacts with PGK1 (when phosphorylated at 'Ser-203'); the interaction is direct, occurs under hypoxic conditions, and targets PGK1 to the mitochondrion by promoting interactions with the TOM complex. Post-translationally, phosphorylation at Ser-71 by DAPK1 results in inhibition of its catalytic activity, nuclear localization, and its ability to induce centrosome amplification, chromosome instability and cell transformation. Ser-71 is dephosphorylated upon IL33-stimulation of dendritic cells. In terms of tissue distribution, expressed in immune cells in the lung (at protein level). The phosphorylated form at Ser-71 is expressed in normal breast tissue cells but not in breast cancer cells.

The protein resides in the nucleus. It localises to the nucleus speckle. The protein localises to the cytoplasm. It catalyses the reaction [protein]-peptidylproline (omega=180) = [protein]-peptidylproline (omega=0). Functionally, peptidyl-prolyl cis/trans isomerase (PPIase) that binds to and isomerizes specific phosphorylated Ser/Thr-Pro (pSer/Thr-Pro) motifs. By inducing conformational changes in a subset of phosphorylated proteins, acts as a molecular switch in multiple cellular processes. Displays a preference for acidic residues located N-terminally to the proline bond to be isomerized. Regulates mitosis presumably by interacting with NIMA and attenuating its mitosis-promoting activity. Down-regulates kinase activity of BTK. Can transactivate multiple oncogenes and induce centrosome amplification, chromosome instability and cell transformation. Required for the efficient dephosphorylation and recycling of RAF1 after mitogen activation. Binds and targets PML and BCL6 for degradation in a phosphorylation-dependent manner. Acts as a regulator of JNK cascade by binding to phosphorylated FBXW7, disrupting FBXW7 dimerization and promoting FBXW7 autoubiquitination and degradation: degradation of FBXW7 leads to subsequent stabilization of JUN. May facilitate the ubiquitination and proteasomal degradation of RBBP8/CtIP through CUL3/KLHL15 E3 ubiquitin-protein ligase complex, hence favors DNA double-strand repair through error-prone non-homologous end joining (NHEJ) over error-free, RBBP8-mediated homologous recombination (HR). Upon IL33-induced lung inflammation, catalyzes cis-trans isomerization of phosphorylated IRAK3/IRAK-M, inducing IRAK3 stabilization, nuclear translocation and expression of pro-inflammatory genes in dendritic cells. Catalyzes cis-trans isomerization of phosphorylated phosphoglycerate kinase PGK1 under hypoxic conditions to promote its binding to the TOM complex and targeting to the mitochondrion. The protein is Peptidyl-prolyl cis-trans isomerase NIMA-interacting 1 (PIN1) of Homo sapiens (Human).